A 358-amino-acid chain; its full sequence is Photosystem II protein D1 2 (358 aa).

3 helical membrane-spanning segments follow: residues 28 to 45 (YVGW…AATT), 117 to 132 (HFLI…QWEL), and 141 to 155 (WICV…AAFA). A chlorophyll a-binding site is contributed by His117. Pheophytin a is bound at residue Tyr125. [CaMn4O5] cluster is bound by residues Asp169 and Glu188. A helical transmembrane segment spans residues 196–217 (FHMLGVAGVFGGSLFSAMHGSL). His197 is a chlorophyll a binding site. A quinone contacts are provided by residues His214 and 263-264 (SF). His214 lines the Fe cation pocket. His271 provides a ligand contact to Fe cation. The chain crosses the membrane as a helical span at residues 273–287 (FLAAWPVVGIWFTSM). [CaMn4O5] cluster contacts are provided by His331, Glu332, Asp341, and Ala343. Residues 344 to 358 (ATESTPVALQAPTIG) constitute a propeptide that is removed on maturation.

The protein belongs to the reaction center PufL/M/PsbA/D family. As to quaternary structure, PSII is composed of 1 copy each of membrane proteins PsbA, PsbB, PsbC, PsbD, PsbE, PsbF, PsbH, PsbI, PsbJ, PsbK, PsbL, PsbM, PsbT, PsbX, PsbY, PsbZ, Psb30/Ycf12, peripheral proteins PsbO, CyanoQ (PsbQ), PsbU, PsbV and a large number of cofactors. It forms dimeric complexes. The D1/D2 heterodimer binds P680, chlorophylls that are the primary electron donor of PSII, and subsequent electron acceptors. It shares a non-heme iron and each subunit binds pheophytin, quinone, additional chlorophylls, carotenoids and lipids. D1 provides most of the ligands for the Mn4-Ca-O5 cluster of the oxygen-evolving complex (OEC). There is also a Cl(-1) ion associated with D1 and D2, which is required for oxygen evolution. The PSII complex binds additional chlorophylls, carotenoids and specific lipids. serves as cofactor. Tyr-160 forms a radical intermediate that is referred to as redox-active TyrZ, YZ or Y-Z. Post-translationally, C-terminally processed by CtpA; processing is essential to allow assembly of the oxygen-evolving complex and thus photosynthetic growth.

The protein resides in the cellular thylakoid membrane. It carries out the reaction 2 a plastoquinone + 4 hnu + 2 H2O = 2 a plastoquinol + O2. Photosystem II (PSII) is a light-driven water:plastoquinone oxidoreductase that uses light energy to abstract electrons from H(2)O, generating O(2) and a proton gradient subsequently used for ATP formation. It consists of a core antenna complex that captures photons, and an electron transfer chain that converts photonic excitation into a charge separation. The D1/D2 (PsbA/PsbD) reaction center heterodimer binds P680, the primary electron donor of PSII as well as several subsequent electron acceptors. This chain is Photosystem II protein D1 2, found in Synechococcus sp. (strain WH7803).